The primary structure comprises 594 residues: Alanine--tRNA ligase (594 aa).

4 residues coordinate Zn(2+): His-456, His-460, Cys-558, and His-562.

The protein belongs to the class-II aminoacyl-tRNA synthetase family. Zn(2+) serves as cofactor.

The protein localises to the cytoplasm. It carries out the reaction tRNA(Ala) + L-alanine + ATP = L-alanyl-tRNA(Ala) + AMP + diphosphate. Its function is as follows. Catalyzes the attachment of alanine to tRNA(Ala) in a two-step reaction: alanine is first activated by ATP to form Ala-AMP and then transferred to the acceptor end of tRNA(Ala). Also edits incorrectly charged Ser-tRNA(Ala) and Gly-tRNA(Ala) via its editing domain. The sequence is that of Alanine--tRNA ligase (alaS) from Borrelia garinii subsp. bavariensis (strain ATCC BAA-2496 / DSM 23469 / PBi) (Borreliella bavariensis).